Here is a 309-residue protein sequence, read N- to C-terminus: Ribosomal RNA small subunit methyltransferase H (309 aa).

S-adenosyl-L-methionine contacts are provided by residues 33 to 35, Asp-53, Phe-79, Asp-100, and Gln-107; that span reads GGH.

It belongs to the methyltransferase superfamily. RsmH family.

Its subcellular location is the cytoplasm. It catalyses the reaction cytidine(1402) in 16S rRNA + S-adenosyl-L-methionine = N(4)-methylcytidine(1402) in 16S rRNA + S-adenosyl-L-homocysteine + H(+). Functionally, specifically methylates the N4 position of cytidine in position 1402 (C1402) of 16S rRNA. The protein is Ribosomal RNA small subunit methyltransferase H of Clostridium botulinum (strain Kyoto / Type A2).